Here is a 681-residue protein sequence, read N- to C-terminus: MERQRSEEANRRFKDLNPSSLYDNLSKPDLGGSSELHTYMNDTSLADIPLFEDTLASEVSSSLISNPSKNNIQHLHPNTSEPFKTSSKSDEYDSYPRTGNVPTFSFTELNDTSVSGFGSQAVFENSVSPLSNPSNSPQAFDLTQGSSSTHNANDFTVNNVGSRRQSIYEFNIGIPSSNIDSSQFLPVSRAIAASEISPSSSPQLLTSFLPSGSVSNPSSPYLQGSVGALYEADAFNFVDVMSQASGTEVDSERFPSVDFEDPSLLMENQQNITGTGSFADYLQPPSSGSLGAFTNASPGESNTGIDFDTDNTNLNPSVDLLSNHSTPSFIFENSPSAEFSHQSSPYLVPNSGRTLNSENARESTIRSVNSPFSEDHADASLTTHVFDPISPTALSNSVLNYDSNNFSGTPQINVVPSSPSKSQSGPSLPANPLLQTDISITYSQSASPVSGQPAMNENSYDLQNANLCAPEMSPTYTARHRSNSAGSRFDAYEPIPQLYTHFSHSSECLSVNQDTELLGKIENDNSKSNDYLSVRNTRPRSRSLNSLVGNKSENSSSSKAKSESKSQGNYVCTFAGCNKRFTRAYNLKSHMNTHTNYRPFQCSICKKSFARQHDKRRHEQLHTGIKAFACVTCNQRFARMDALNRHYKSEVGQNCLRTATERGIQVPPSRKTAVASTSKQK.

The span at 1-15 shows a compositional bias: basic and acidic residues; the sequence is MERQRSEEANRRFKD. Disordered stretches follow at residues 1–29, 66–96, 340–372, 410–433, and 520–563; these read MERQ…SKPD, NPSK…DSYP, SHQS…NSPF, PQIN…ANPL, and KIEN…AKSE. 2 stretches are compositionally biased toward polar residues: residues 66 to 86 and 340 to 358; these read NPSK…FKTS and SHQS…LNSE. The span at 416–428 shows a compositional bias: low complexity; sequence PSSPSKSQSGPSL. The segment covering 528–549 has biased composition (polar residues); the sequence is SNDYLSVRNTRPRSRSLNSLVG. Phosphoserine is present on residues Ser543 and Ser546. Low complexity predominate over residues 550–559; the sequence is NKSENSSSSK. C2H2-type zinc fingers lie at residues 570 to 594 and 600 to 622; these read YVCT…MNTH and FQCS…EQLH. The segment at 628 to 650 adopts a C2H2-type 3; degenerate zinc-finger fold; that stretch reads FACVTCNQRFARMDALNRHYKSE. Residues 662-681 are disordered; sequence RGIQVPPSRKTAVASTSKQK.

Belongs to the EGR C2H2-type zinc-finger protein family. Phosphorylated. Dephosphorylated by calcineurin which leads to rapid translocation from the cytoplasm to the nucleus.

Its subcellular location is the nucleus. It localises to the cytoplasm. Involved in the regulation of calcium ion homeostasis. Binds to the calcineurin-dependent response element. Transcriptionally regulates pmc1. In Schizosaccharomyces pombe (strain 972 / ATCC 24843) (Fission yeast), this protein is Transcriptional regulator prz1 (prz1).